Consider the following 314-residue polypeptide: 3'-5' exoribonuclease YhaM (314 aa).

The region spanning 163–279 (HVVSMLDLAK…LHYIDNLDAK (117 aa)) is the HD domain.

Belongs to the YhaM family.

Its function is as follows. Shows a 3'-5' exoribonuclease activity. The sequence is that of 3'-5' exoribonuclease YhaM from Bacillus cereus (strain AH187).